Consider the following 82-residue polypeptide: Large ribosomal subunit protein bL31B (82 aa).

It belongs to the bacterial ribosomal protein bL31 family. Type B subfamily. Part of the 50S ribosomal subunit.

The chain is Large ribosomal subunit protein bL31B from Bacillus velezensis (strain DSM 23117 / BGSC 10A6 / LMG 26770 / FZB42) (Bacillus amyloliquefaciens subsp. plantarum).